A 130-amino-acid chain; its full sequence is Small ribosomal subunit protein uS8 (130 aa).

It belongs to the universal ribosomal protein uS8 family. In terms of assembly, part of the 30S ribosomal subunit.

Its function is as follows. One of the primary rRNA binding proteins, it binds directly to 16S rRNA central domain where it helps coordinate assembly of the platform of the 30S subunit. In Pyrococcus furiosus (strain ATCC 43587 / DSM 3638 / JCM 8422 / Vc1), this protein is Small ribosomal subunit protein uS8.